Reading from the N-terminus, the 195-residue chain is Phosphoheptose isomerase (195 aa).

An SIS domain is found at 35–195; the sequence is IVSKILQAGN…IVEYNLFKME (161 aa). 51 to 53 provides a ligand contact to substrate; the sequence is NGG. Zn(2+) contacts are provided by histidine 60 and glutamate 64. Residues glutamate 64, 95–96, 121–123, serine 126, and glutamine 173 each bind substrate; these read ND and STS. Zn(2+)-binding residues include glutamine 173 and histidine 181.

The protein belongs to the SIS family. GmhA subfamily. The cofactor is Zn(2+).

The protein resides in the cytoplasm. The catalysed reaction is 2 D-sedoheptulose 7-phosphate = D-glycero-alpha-D-manno-heptose 7-phosphate + D-glycero-beta-D-manno-heptose 7-phosphate. It functions in the pathway carbohydrate biosynthesis; D-glycero-D-manno-heptose 7-phosphate biosynthesis; D-glycero-alpha-D-manno-heptose 7-phosphate and D-glycero-beta-D-manno-heptose 7-phosphate from sedoheptulose 7-phosphate: step 1/1. In terms of biological role, catalyzes the isomerization of sedoheptulose 7-phosphate in D-glycero-D-manno-heptose 7-phosphate. The sequence is that of Phosphoheptose isomerase from Leptospira interrogans serogroup Icterohaemorrhagiae serovar copenhageni (strain Fiocruz L1-130).